Reading from the N-terminus, the 109-residue chain is Spermidine export protein MdtI (109 aa).

Helical transmembrane passes span tryptophan 6–leucine 26, phenylalanine 36–valine 56, alanine 64–phenylalanine 84, and leucine 88–leucine 108.

This sequence belongs to the drug/metabolite transporter (DMT) superfamily. Small multidrug resistance (SMR) (TC 2.A.7.1) family. MdtI subfamily. In terms of assembly, forms a complex with MdtJ.

The protein resides in the cell inner membrane. Catalyzes the excretion of spermidine. This is Spermidine export protein MdtI from Citrobacter koseri (strain ATCC BAA-895 / CDC 4225-83 / SGSC4696).